Here is a 255-residue protein sequence, read N- to C-terminus: Fumarate reductase cytochrome b subunit (255 aa).

The next 5 helical transmembrane spans lie at 33–53, 78–98, 126–146, 168–188, and 208–228; these read TGLI…SILI, IVSV…FLAL, WFIQ…HLFV, FWLL…IGLY, and IKWA…GAYI. Heme b contacts are provided by His-44, His-93, His-143, and His-182.

It belongs to the diheme cytochrome b FrdC family. As to quaternary structure, part of an enzyme complex containing three subunits: a flavoprotein (frdA), an iron-sulfur protein (frdB), and diheme cytochrome b (frdC). It depends on heme b as a cofactor.

It is found in the cell inner membrane. The fumarate reductase enzyme complex is required for fumarate respiration. This subunit anchors the complex in the membrane and binds a diheme cytochrome b. This Helicobacter pylori (strain J99 / ATCC 700824) (Campylobacter pylori J99) protein is Fumarate reductase cytochrome b subunit (frdC).